Consider the following 357-residue polypeptide: Probable GTP 3',8-cyclase (357 aa).

The Radical SAM core domain maps to Asp5 to Arg234. A GTP-binding site is contributed by Arg14. The [4Fe-4S] cluster site is built by Cys21 and Cys25. Tyr27 lines the S-adenosyl-L-methionine pocket. Residue Cys28 participates in [4Fe-4S] cluster binding. Lys68 serves as a coordination point for GTP. Residue Gly72 coordinates S-adenosyl-L-methionine. A GTP-binding site is contributed by Thr96. Ser120 contacts S-adenosyl-L-methionine. Lys157 contacts GTP. The disordered stretch occupies residues Ser232–Asp256. Cys272 and Cys275 together coordinate [4Fe-4S] cluster. GTP is bound at residue Arg277–Arg279. Cys289 serves as a coordination point for [4Fe-4S] cluster.

Belongs to the radical SAM superfamily. MoaA family. Requires [4Fe-4S] cluster as cofactor.

The catalysed reaction is GTP + AH2 + S-adenosyl-L-methionine = (8S)-3',8-cyclo-7,8-dihydroguanosine 5'-triphosphate + 5'-deoxyadenosine + L-methionine + A + H(+). The protein operates within cofactor biosynthesis; molybdopterin biosynthesis. Functionally, catalyzes the cyclization of GTP to (8S)-3',8-cyclo-7,8-dihydroguanosine 5'-triphosphate. In Halobacterium salinarum (strain ATCC 29341 / DSM 671 / R1), this protein is Probable GTP 3',8-cyclase.